We begin with the raw amino-acid sequence, 347 residues long: Cell shape-determining protein MreB (347 aa).

Residues 19–21, 168–170, 216–219, and 296–299 each bind ATP; these read TAN, GGT, ERIK, and GGAL.

The protein belongs to the FtsA/MreB family. As to quaternary structure, forms polymers.

Its subcellular location is the cytoplasm. Its function is as follows. Forms membrane-associated dynamic filaments that are essential for cell shape determination. Acts by regulating cell wall synthesis and cell elongation, and thus cell shape. A feedback loop between cell geometry and MreB localization may maintain elongated cell shape by targeting cell wall growth to regions of negative cell wall curvature. The protein is Cell shape-determining protein MreB of Escherichia coli O6:H1 (strain CFT073 / ATCC 700928 / UPEC).